Reading from the N-terminus, the 210-residue chain is 23.5 kDa heat shock protein, mitochondrial (210 aa).

The transit peptide at 1 to 20 (MASSSALALRRLLSSSTVAV) directs the protein to the mitochondrion. One can recognise a sHSP domain in the interval 102–210 (MGASGVRRGW…RNNIRHINVD (109 aa)).

It belongs to the small heat shock protein (HSP20) family. As to quaternary structure, may form oligomeric structures.

Its subcellular location is the mitochondrion. This chain is 23.5 kDa heat shock protein, mitochondrial (HSP23.5), found in Arabidopsis thaliana (Mouse-ear cress).